Reading from the N-terminus, the 219-residue chain is Apoptosis regulator OPG045 (219 aa).

It belongs to the orthopoxvirus OPG045 family. In terms of assembly, homodimer. Interacts with host pro-apoptotic protein BCL2L11 (via BH3 domain). Interacts with host NLRP1. Interacts with host BAK.

Its subcellular location is the host mitochondrion outer membrane. It is found in the host cytoplasm. In terms of biological role, plays a role in evading host innate immune response by inhibiting host inflammasome activation. Interacts with and inhibits NLR-mediated interleukin-1 beta/IL1B production in infected cells. At the host mitochondria outer membrane, interacts with the BH3 domain of host BAK and prevents BAK from binding active BAX. In turn, host apoptosis is inhibited. The polypeptide is Apoptosis regulator OPG045 (OPG045) (Cynomys gunnisoni (Gunnison's prairie dog)).